Consider the following 1193-residue polypeptide: Protein diaphanous homolog 3 (1193 aa).

A compositionally biased stretch (basic residues) spans 1–10 (MERHQPRLHH). Residues 1–57 (MERHQPRLHHPAQGSAAGTPYPSSASLRGCRESKMPRRKGPQHPPPPSGPEEPGEKR) form a disordered region. Serine 26 bears the Phosphoserine mark. The short motif at 36–60 (PRRKGPQHPPPPSGPEEPGEKRPKF) is the Nuclear localization signal element. Threonine 68 is modified (phosphothreonine). Phosphoserine is present on residues serine 77 and serine 175. In terms of domain architecture, GBD/FH3 spans 114–476 (PKPLSENELL…QIVLHRDGMD (363 aa)). A coiled-coil region spans residues 497–554 (IDQAKLEEFEEKASELYKKFEKEFTDHQETQAELQKKEAKINELQAELQAFKSQFGAL). Residues 558 to 622 (CNIPLPPSKE…PPPLGFLGGQ (65 aa)) form a disordered region. Residues 561–631 (PLPPSKEGGT…QNSPPLPILP (71 aa)) form the FH1 domain. A compositionally biased stretch (pro residues) spans 575-600 (LPPPPPLPSGGGVPPPPPPPPPPPLP). Position 624 is a phosphoserine (serine 624). The 399-residue stretch at 636–1034 (PKKEFKPEIS…EKRVRIAKEL (399 aa)) folds into the FH2 domain. Positions 1013–1056 (KENIKKREAEEKEKRVRIAKELAERERLERQQKKKRLLEMKTEG) form a coiled coil. Positions 1057–1087 (DETGVMDNLLEALQSGAAFRDRRKRTPMPKD) constitute a DAD domain. 2 positions are modified to phosphoserine: serine 1093 and serine 1179. The Nuclear export signal signature appears at 1184–1193 (EALLARLRAL).

This sequence belongs to the formin homology family. Diaphanous subfamily. Ubiquitinated.

The protein resides in the cytoplasm. It is found in the nucleus. In terms of biological role, actin nucleation and elongation factor required for the assembly of F-actin structures, such as actin cables and stress fibers. Required for cytokinesis, stress fiber formation and transcriptional activation of the serum response factor. Binds to GTP-bound form of Rho and to profilin: acts in a Rho-dependent manner to recruit profilin to the membrane, where it promotes actin polymerization. DFR proteins couple Rho and Src tyrosine kinase during signaling and the regulation of actin dynamics. Also acts as an actin nucleation and elongation factor in the nucleus by promoting nuclear actin polymerization inside the nucleus to drive serum-dependent SRF-MRTFA activity. The chain is Protein diaphanous homolog 3 (DIAPH3) from Homo sapiens (Human).